We begin with the raw amino-acid sequence, 529 residues long: FAD-binding monooxygenase BOA2 (529 aa).

Residues Val58–Lys61, Asp70–Ile71, and Tyr76 contribute to the FAD site. Residue Ala68–Asp70 coordinates NADP(+). NADP(+) is bound by residues Thr198 to Gln204 and Arg221 to Ser222.

Belongs to the FAD-binding monooxygenase family. The cofactor is FAD.

It participates in polyketide biosynthesis. Its function is as follows. FAD-binding monooxygenase; part of the gene cluster A that mediates the biosynthesis of botcinic acid and its botcinin derivatives, acetate-derived polyketides that contribute to virulence when combined with the sesquiterpene botrydial. Botcinic acid and its derivatives have been shown to induce chlorosis and necrosis during host plant infection, but also have antifungal activities. Two polyketide synthases, BOA6 and BOA9, are involved in the biosynthesis of botcinins. BOA6 mediates the formation of the per-methylated tetraketide core by condensation of four units of malonyl-CoA with one unit of acetyl-CoA, which would be methylated in activated methylene groups to yield a bicyclic acid intermediate that could then either be converted to botrylactone derivatives or lose the starter acetate unit through a retro-Claisen type C-C bond cleavage to yield botcinin derivatives. The second polyketide synthase, BOA9, is probably required for the biosynthesis of the tetraketide side chain of botcinins. The methyltransferase (MT) domain within BOA6 is probably responsible for the incorporation of four methyl groups. The trans-enoyl reductase BOA5 might take over the enoyl reductase function of BOA6 that misses an ER domain. The monooxygenases BOA2, BOA3 and BOA4 might be involved in further hydroxylations at C4, C5 and C8, whereas BOA7, close to BOA9, could potentially be involved in the hydroxylation at C4 in the side chain of botcinins. The polypeptide is FAD-binding monooxygenase BOA2 (Botryotinia fuckeliana (strain B05.10) (Noble rot fungus)).